The sequence spans 301 residues: Uricase-2 isozyme 2 (301 aa).

Residues K17 and T63 each act as charge relay system in the active site. T63, D64, F165, R182, V237, Q238, and N257 together coordinate urate. The Charge relay system role is filled by H259. Positions 299–301 match the Microbody targeting signal motif; sequence SKL.

The protein belongs to the uricase family.

The protein localises to the peroxisome. It carries out the reaction urate + O2 + H2O = 5-hydroxyisourate + H2O2. Its pathway is purine metabolism; urate degradation; (S)-allantoin from urate: step 1/3. Catalyzes the oxidation of uric acid to 5-hydroxyisourate, which is further processed to form (S)-allantoin. The chain is Uricase-2 isozyme 2 from Canavalia lineata (Beach bean).